The chain runs to 266 residues: Glucosamine-6-phosphate deaminase (266 aa).

Aspartate 72 acts as the Proton acceptor; for enolization step in catalysis. Aspartate 141 serves as the catalytic For ring-opening step. Histidine 143 serves as the catalytic Proton acceptor; for ring-opening step. Glutamate 148 (for ring-opening step) is an active-site residue.

The protein belongs to the glucosamine/galactosamine-6-phosphate isomerase family. NagB subfamily. As to quaternary structure, homohexamer.

The enzyme catalyses alpha-D-glucosamine 6-phosphate + H2O = beta-D-fructose 6-phosphate + NH4(+). It functions in the pathway amino-sugar metabolism; N-acetylneuraminate degradation; D-fructose 6-phosphate from N-acetylneuraminate: step 5/5. Its activity is regulated as follows. Allosterically activated by N-acetylglucosamine 6-phosphate (GlcNAc6P). Functionally, catalyzes the reversible isomerization-deamination of glucosamine 6-phosphate (GlcN6P) to form fructose 6-phosphate (Fru6P) and ammonium ion. The protein is Glucosamine-6-phosphate deaminase of Salmonella typhimurium (strain LT2 / SGSC1412 / ATCC 700720).